Consider the following 605-residue polypeptide: MASEYLEHKLALLPGLPGCYLMKNINSQIIYVGKAKNLKNRVRSYFKSSHTGKTAQLVSEIVDFETIITSTDKEAFLLEITLIQKHQPYFNIKLKRGTGYPYIKITNERDPQLLLVSDIRKDGAYYFGPYPNVYAAEETMHFLQKVYPLRRCPGHQGRPCLYYHMGQCLGACFKEVPEAEYDQQIRKIKSFLNGNVGHAKKDLTQRMEKAAADMAYERAGDLRDQIRYIEATVEKQKIISNDSTPRDIFNFYLDKGWLSIQVFFIRQARLMKREKRLFPVVNSAEEELASFIVQFYQRKNTVLPREILVPASIDHDVIEELLKVPVRTPQRGTKRDLLEMAGKNAKLVLEEKFRLLELDEGKTTGAMKEITDALGIAPGHKIEAFDHSHIQGADLVSAMVVFVDGQPNKKLYRKYKLQTVDHADETASTLEVIRRRYGRLLKEHAPMPDLILMDGGDIQMNAVKEVLEDEFDLHIPVAGMVKNDHHKTADLLFGPDDHHVHLDPKSQGFYLVQRIQDEVHRFAISFHRQVHTKHSLSSRLDRIPGVGPKTRNKLLRKFGSTKKISEASMAEIRELGISEAVARTIHVTLAAETAEIKNPRTPTSL.

The GIY-YIG domain maps to G15–I92. The UVR domain occupies G197 to T232.

Belongs to the UvrC family. As to quaternary structure, interacts with UvrB in an incision complex.

The protein resides in the cytoplasm. Its function is as follows. The UvrABC repair system catalyzes the recognition and processing of DNA lesions. UvrC both incises the 5' and 3' sides of the lesion. The N-terminal half is responsible for the 3' incision and the C-terminal half is responsible for the 5' incision. The protein is UvrABC system protein C of Levilactobacillus brevis (strain ATCC 367 / BCRC 12310 / CIP 105137 / JCM 1170 / LMG 11437 / NCIMB 947 / NCTC 947) (Lactobacillus brevis).